The chain runs to 413 residues: Phosphatidylcholine-sterol acyltransferase (413 aa).

Residues 1–22 (GRTGAGFTLLTLLLLLPQPTSQ) form the signal peptide. Cys72 and Cys96 are oxidised to a cystine. A glycan (N-linked (GlcNAc...) asparagine) is linked at Asn106. Ser203 functions as the Charge relay system in the catalytic mechanism. Ser203 (nucleophile) is an active-site residue. A glycan (N-linked (GlcNAc...) asparagine) is linked at Asn294. Cys335 and Cys378 are joined by a disulfide. Active-site charge relay system residues include Asp367 and His399. Residue Asn406 is glycosylated (N-linked (GlcNAc...) asparagine).

It belongs to the AB hydrolase superfamily. Lipase family. In terms of tissue distribution, detected in blood plasma (at protein level). Expressed in liver, brain and adrenal glands. Lower expression in testes. In laying hens, expressed higher in brain than in liver. In roosters, higher levels in liver than in brain.

The protein resides in the secreted. It catalyses the reaction a sterol + a 1,2-diacyl-sn-glycero-3-phosphocholine = a sterol ester + a 1-acyl-sn-glycero-3-phosphocholine. APOA1 is the most potent activator in plasma. Also activated by APOE, APOC1 and APOA4. Its function is as follows. Central enzyme in the extracellular metabolism of plasma lipoproteins. Synthesized mainly in the liver and secreted into plasma where it converts cholesterol and phosphatidylcholines (lecithins) to cholesteryl esters and lysophosphatidylcholines on the surface of high and low density lipoproteins (HDLs and LDLs). The cholesterol ester is then transported back to the liver. Also produced in the brain by primary astrocytes, and esterifies free cholesterol on nascent APOE-containing lipoproteins secreted from glia and influences cerebral spinal fluid (CSF) APOE- and APOA1 levels. Together with APOE and the cholesterol transporter ABCA1, plays a key role in the maturation of glial-derived, nascent lipoproteins. Required for remodeling high-density lipoprotein particles into their spherical forms. Has a preference for plasma 16:0-18:2 or 18:O-18:2 phosphatidylcholines. The protein is Phosphatidylcholine-sterol acyltransferase (LCAT) of Gallus gallus (Chicken).